Here is a 385-residue protein sequence, read N- to C-terminus: ELAV-like protein 4 (385 aa).

The tract at residues threonine 12 to aspartate 48 is disordered. Over residues serine 18–asparagine 33 the composition is skewed to low complexity. A compositionally biased stretch (polar residues) spans arginine 34 to aspartate 48. At serine 38 the chain carries Phosphoserine. RRM domains lie at threonine 51–proline 129 and alanine 137–asparagine 217. Phosphoserine is present on serine 233. Position 248 is an asymmetric dimethylarginine; by CARM1; alternate (arginine 248). Omega-N-methylarginine; by CARM1; alternate is present on arginine 248. An RRM 3 domain is found at tryptophan 302–asparagine 380.

This sequence belongs to the RRM elav family. In terms of assembly, component of a TAU mRNP complex, at least composed of IGF2BP1, ELAVL4 and G3BP. Associates with the EIF4F cap-binding complex, composed of EIF4G, EIF4A, EIF4E and PABP. Within the EIF4F cap-binding complex, interacts with EIF4A. Interacts with SMN (via Tudor domain) in an RNA-independent manner; the interaction is required for localization of ELAVL4 to RNA granules. Interacts with MAP1 light chain LC1 (via C-terminus); the interaction contributes to the association of ELAVL4 with microtubules. Interacts with MAP1 light chain LC2. Post-translationally, methylated by CARM1, which leads to reduced RNA-binding activity and enhanced interaction with SMN. Methylation at Arg-248 by CARM1 weakens protective binding to the 3'UTR of CDKN1A mRNA and down-regulates CDKN1A protein expression, thereby maintaining cells in a proliferative state. Methylation is inhibited by NGF, which facilitates neurite outgrowth. Expressed in pancreatic beta cells (at protein level). Expressed in the brain.

The protein resides in the cytoplasm. It localises to the perikaryon. Its subcellular location is the cell projection. The protein localises to the dendrite. It is found in the axon. The protein resides in the growth cone. Its function is as follows. RNA-binding protein that is involved in the post-transcriptional regulation of mRNAs. Plays a role in the regulation of mRNA stability, alternative splicing and translation. Binds to AU-rich element (ARE) sequences in the 3' untranslated region (UTR) of target mRNAs, including GAP43, VEGF, FOS, CDKN1A and ACHE mRNA. Many of the target mRNAs are coding for RNA-binding proteins, transcription factors and proteins involved in RNA processing and/or neuronal development and function. By binding to the mRNA 3'UTR, decreases mRNA deadenylation and thereby contributes to the stabilization of mRNA molecules and their protection from decay. Also binds to the polyadenylated (poly(A)) tail in the 3'UTR of mRNA, thereby increasing its affinity for mRNA binding. Mainly plays a role in neuron-specific RNA processing by stabilization of mRNAs such as GAP43, ACHE and mRNAs of other neuronal proteins, thereby contributing to the differentiation of neural progenitor cells, nervous system development, learning and memory mechanisms. Involved in the negative regulation of the proliferative activity of neuronal stem cells and in the positive regulation of neuronal differentiation of neural progenitor cells. Promotes neuronal differentiation of neural stem/progenitor cells in the adult subventricular zone of the hippocampus by binding to and stabilizing SATB1 mRNA. Binds and stabilizes MSI1 mRNA in neural stem cells. Exhibits increased binding to ACHE mRNA during neuronal differentiation, thereby stabilizing ACHE mRNA and enhancing its expression. Protects CDKN1A mRNA from decay by binding to its 3'-UTR. May bind to APP and BACE1 mRNAS and the BACE1AS lncRNA and enhance their stabilization. Plays a role in neurite outgrowth and in the establishment and maturation of dendritic arbors, thereby contributing to neocortical and hippocampal circuitry function. Stabilizes GAP43 mRNA and protects it from decay during postembryonic development in the brain. By promoting the stabilization of GAP43 mRNA, plays a role in NGF-mediated neurite outgrowth. Binds to BDNF long 3'UTR mRNA, thereby leading to its stabilization and increased dendritic translation after activation of PKC. By increasing translation of BDNF after nerve injury, may contribute to nerve regeneration. Acts as a stabilizing factor by binding to the 3'UTR of NOVA1 mRNA, thereby increasing its translation and enhancing its functional activity in neuron-specific splicing. Stimulates translation of mRNA in a poly(A)- and cap-dependent manner, possibly by associating with the EIF4F cap-binding complex. May also negatively regulate translation by binding to the 5'UTR of Ins2 mRNA, thereby repressing its translation. Upon glucose stimulation, Ins2 mRNA is released from ELAVL4 and translational inhibition is abolished. Also plays a role in the regulation of alternative splicing. May regulate alternative splicing of CALCA pre-mRNA into Calcitonin and Calcitonin gene-related peptide 1 (CGRP) by competing with splicing regulator TIAR for binding to U-rich intronic sequences of CALCA pre-mRNA. This is ELAV-like protein 4 (ELAVL4) from Homo sapiens (Human).